A 155-amino-acid chain; its full sequence is SsrA-binding protein (155 aa).

This sequence belongs to the SmpB family.

It is found in the cytoplasm. Its function is as follows. Required for rescue of stalled ribosomes mediated by trans-translation. Binds to transfer-messenger RNA (tmRNA), required for stable association of tmRNA with ribosomes. tmRNA and SmpB together mimic tRNA shape, replacing the anticodon stem-loop with SmpB. tmRNA is encoded by the ssrA gene; the 2 termini fold to resemble tRNA(Ala) and it encodes a 'tag peptide', a short internal open reading frame. During trans-translation Ala-aminoacylated tmRNA acts like a tRNA, entering the A-site of stalled ribosomes, displacing the stalled mRNA. The ribosome then switches to translate the ORF on the tmRNA; the nascent peptide is terminated with the 'tag peptide' encoded by the tmRNA and targeted for degradation. The ribosome is freed to recommence translation, which seems to be the essential function of trans-translation. In Bacillus cereus (strain G9842), this protein is SsrA-binding protein.